Reading from the N-terminus, the 268-residue chain is Protein CDV3 homolog (268 aa).

Over residues 40–50 (KREVVKPKKPE) the composition is skewed to basic and acidic residues. 2 disordered regions span residues 40–145 (KREV…ERVG) and 184–268 (QQAG…DEAS). Positions 51–61 (AAAGGVAVVGE) are enriched in low complexity. The span at 76 to 85 (VEEEWKEFEE) shows a compositional bias: acidic residues. Over residues 98-107 (QLSTITAQES) the composition is skewed to polar residues. The segment covering 123–132 (NYDEDDEDSN) has biased composition (acidic residues). Basic and acidic residues predominate over residues 221 to 239 (RPEEQRKKKNEPAFEEVRH).

The protein belongs to the CDV3 family.

This Drosophila yakuba (Fruit fly) protein is Protein CDV3 homolog.